Reading from the N-terminus, the 668-residue chain is tRNA 5-methylaminomethyl-2-thiouridine biosynthesis bifunctional protein MnmC (668 aa).

Residues 1 to 245 form a tRNA (mnm(5)s(2)U34)-methyltransferase region; that stretch reads MKHYSIQPAN…KREMLCGVME (245 aa). Positions 270 to 668 are FAD-dependent cmnm(5)s(2)U34 oxidoreductase; it reads IGGGIASALL…LLKGKAVKAG (399 aa).

This sequence in the N-terminal section; belongs to the methyltransferase superfamily. tRNA (mnm(5)s(2)U34)-methyltransferase family. The protein in the C-terminal section; belongs to the DAO family. FAD is required as a cofactor.

It localises to the cytoplasm. The enzyme catalyses 5-aminomethyl-2-thiouridine(34) in tRNA + S-adenosyl-L-methionine = 5-methylaminomethyl-2-thiouridine(34) in tRNA + S-adenosyl-L-homocysteine + H(+). Its function is as follows. Catalyzes the last two steps in the biosynthesis of 5-methylaminomethyl-2-thiouridine (mnm(5)s(2)U) at the wobble position (U34) in tRNA. Catalyzes the FAD-dependent demodification of cmnm(5)s(2)U34 to nm(5)s(2)U34, followed by the transfer of a methyl group from S-adenosyl-L-methionine to nm(5)s(2)U34, to form mnm(5)s(2)U34. This Escherichia coli O6:H1 (strain CFT073 / ATCC 700928 / UPEC) protein is tRNA 5-methylaminomethyl-2-thiouridine biosynthesis bifunctional protein MnmC.